A 288-amino-acid polypeptide reads, in one-letter code: Acidic endochitinase SP2 (288 aa).

The signal sequence occupies residues 1–27 (MTLLLKNTLYLALIISVISSFPTSLFA). Glutamine 28 carries the post-translational modification Pyrrolidone carboxylic acid. Residues 28–63 (QNCGCAPNLCCSNFGFCGTGTPYCGVGNCQSGPCEG) form the Chitin-binding type-1 domain. Cystine bridges form between cysteine 30–cysteine 38, cysteine 32–cysteine 44, cysteine 37–cysteine 51, and cysteine 56–cysteine 61. Positions 64–78 (GTPTTPTTPTTPTTP) are enriched in low complexity. The segment at 64–84 (GTPTTPTTPTTPTTPGTGGGG) is disordered. The segment at 64–85 (GTPTTPTTPTTPTTPGTGGGGS) is hinge region (Gly/Pro/Thr-rich). 4-hydroxyproline is present on residues proline 66, proline 69, proline 72, and proline 75. 4 consecutive repeat copies span residues 67-69 (TTP), 70-72 (TTP), 73-75 (TTP), and 76-78 (TTP). Residues 67–78 (TTPTTPTTPTTP) form a 4 X 3 AA tandem repeats of T-T-P region. The catalytic stretch occupies residues 86–288 (SVSDIVSQAF…GVAPGDNLTC (203 aa)). 3 disulfide bridges follow: cysteine 107–cysteine 154, cysteine 168–cysteine 178, and cysteine 256–cysteine 288. The active-site Proton donor is the glutamate 149.

Belongs to the glycosyl hydrolase 19 family. Chitinase class I subfamily. O-glycosylated on hydroxyprolines; contains xylose. As to expression, localized to infected area.

It is found in the secreted. It localises to the extracellular space. It carries out the reaction Random endo-hydrolysis of N-acetyl-beta-D-glucosaminide (1-&gt;4)-beta-linkages in chitin and chitodextrins.. In terms of biological role, defense against chitin-containing fungal pathogens. The chain is Acidic endochitinase SP2 (SP2) from Beta vulgaris (Sugar beet).